A 145-amino-acid chain; its full sequence is 3-hydroxyacyl-[acyl-carrier-protein] dehydratase FabZ (145 aa).

The active site involves His47.

Belongs to the thioester dehydratase family. FabZ subfamily.

It is found in the cytoplasm. The enzyme catalyses a (3R)-hydroxyacyl-[ACP] = a (2E)-enoyl-[ACP] + H2O. Involved in unsaturated fatty acids biosynthesis. Catalyzes the dehydration of short chain beta-hydroxyacyl-ACPs and long chain saturated and unsaturated beta-hydroxyacyl-ACPs. The polypeptide is 3-hydroxyacyl-[acyl-carrier-protein] dehydratase FabZ (Polaromonas naphthalenivorans (strain CJ2)).